Reading from the N-terminus, the 380-residue chain is Cytochrome b (380 aa).

Transmembrane regions (helical) follow at residues 34 to 54 (FGSL…LLAM), 78 to 99 (WLIR…YLHI), 114 to 134 (WNTG…GYVL), and 179 to 199 (FFAL…IHLT). 2 residues coordinate heme b: H84 and H98. Residues H183 and H197 each contribute to the heme b site. Residue H202 coordinates a ubiquinone. The next 4 helical transmembrane spans lie at 227–247 (LKDI…ALFS), 289–309 (LGGV…PFLH), 321–341 (LSQL…WVGS), and 348–368 (FIII…ILFP).

Belongs to the cytochrome b family. As to quaternary structure, the cytochrome bc1 complex contains 11 subunits: 3 respiratory subunits (MT-CYB, CYC1 and UQCRFS1), 2 core proteins (UQCRC1 and UQCRC2) and 6 low-molecular weight proteins (UQCRH/QCR6, UQCRB/QCR7, UQCRQ/QCR8, UQCR10/QCR9, UQCR11/QCR10 and a cleavage product of UQCRFS1). This cytochrome bc1 complex then forms a dimer. It depends on heme b as a cofactor.

It localises to the mitochondrion inner membrane. Component of the ubiquinol-cytochrome c reductase complex (complex III or cytochrome b-c1 complex) that is part of the mitochondrial respiratory chain. The b-c1 complex mediates electron transfer from ubiquinol to cytochrome c. Contributes to the generation of a proton gradient across the mitochondrial membrane that is then used for ATP synthesis. This is Cytochrome b (MT-CYB) from Ardenna tenuirostris (Short-tailed shearwater).